Reading from the N-terminus, the 398-residue chain is Serpin-ZX (398 aa).

The RCL stretch occupies residues 342 to 366 (GTEAAARTARVVTLRSLPVEPVKVD).

The protein belongs to the serpin family. As to expression, expressed in roots, coleoptiles, shoots, leaves, embryo and endosperm.

Inhibits chymotrypsin, cathepsin G and trypsin in vitro. The polypeptide is Serpin-ZX (PAZX) (Hordeum vulgare (Barley)).